A 461-amino-acid chain; its full sequence is Argininosuccinate lyase (461 aa).

Belongs to the lyase 1 family. Argininosuccinate lyase subfamily.

The protein resides in the cytoplasm. The catalysed reaction is 2-(N(omega)-L-arginino)succinate = fumarate + L-arginine. It participates in amino-acid biosynthesis; L-arginine biosynthesis; L-arginine from L-ornithine and carbamoyl phosphate: step 3/3. This Chlorobium luteolum (strain DSM 273 / BCRC 81028 / 2530) (Pelodictyon luteolum) protein is Argininosuccinate lyase.